An 863-amino-acid polypeptide reads, in one-letter code: Leucine--tRNA ligase (863 aa).

A 'HIGH' region motif is present at residues 40–51 (PYPSGAGLHVGH). Positions 635 to 639 (KMSKS) match the 'KMSKS' region motif. Lys-638 is an ATP binding site.

It belongs to the class-I aminoacyl-tRNA synthetase family.

It is found in the cytoplasm. It carries out the reaction tRNA(Leu) + L-leucine + ATP = L-leucyl-tRNA(Leu) + AMP + diphosphate. The chain is Leucine--tRNA ligase from Leptospira interrogans serogroup Icterohaemorrhagiae serovar Lai (strain 56601).